Here is a 309-residue protein sequence, read N- to C-terminus: Probable 5-dehydro-4-deoxyglucarate dehydratase (309 aa).

The protein belongs to the DapA family.

The enzyme catalyses 5-dehydro-4-deoxy-D-glucarate + H(+) = 2,5-dioxopentanoate + CO2 + H2O. It participates in carbohydrate acid metabolism; D-glucarate degradation; 2,5-dioxopentanoate from D-glucarate: step 2/2. This is Probable 5-dehydro-4-deoxyglucarate dehydratase from Saccharopolyspora erythraea (strain ATCC 11635 / DSM 40517 / JCM 4748 / NBRC 13426 / NCIMB 8594 / NRRL 2338).